Here is a 205-residue protein sequence, read N- to C-terminus: Recombination protein RecR (205 aa).

The C4-type zinc finger occupies 60-75 (CKVCHNISDTETCRIC). The 96-residue stretch at 83-178 (STICVVESIR…KLSVIARGIS (96 aa)) folds into the Toprim domain.

The protein belongs to the RecR family.

In terms of biological role, may play a role in DNA repair. It seems to be involved in an RecBC-independent recombinational process of DNA repair. It may act with RecF and RecO. In Phocaeicola vulgatus (strain ATCC 8482 / DSM 1447 / JCM 5826 / CCUG 4940 / NBRC 14291 / NCTC 11154) (Bacteroides vulgatus), this protein is Recombination protein RecR.